A 209-amino-acid polypeptide reads, in one-letter code: Mitochondrial import inner membrane translocase subunit Tim23 (209 aa).

3 helical membrane passes run 73–93 (FELA…FGAM), 125–145 (ALWA…GVII), and 172–194 (GGLR…YALY).

This sequence belongs to the Tim17/Tim22/Tim23 family. In terms of assembly, component of the TIM23 complex at least composed of TIMM23, TIMM17 (TIMM17A or TIMM17B) and TIMM50; within this complex, directly interacts with TIMM50. The complex interacts with the TIMM44 component of the PAM complex and with DNAJC15. Upon mitochondrial depolarization, interacts with PINK1; the interaction is required for PINK1 accumulation at the outer mitochondrial membrane, kinase activation by autophosphorylation and PRKN recruitement to mitochondria.

Its subcellular location is the mitochondrion inner membrane. Its function is as follows. Essential component of the TIM23 complex, a complex that mediates the translocation of transit peptide-containing proteins across the mitochondrial inner membrane. Has a role in the activation of stress-induced mitophagy by protecting PINK1 from OMA1-mediated degradation and facilitating its accumulation at the outer mitochondrial membrane in response to depolarization. The sequence is that of Mitochondrial import inner membrane translocase subunit Tim23 (TIMM23) from Pongo abelii (Sumatran orangutan).